We begin with the raw amino-acid sequence, 433 residues long: MLRIITQQADVKAELQRICDRTHDEQVLHKEATVREVLQAVKRQGDKAVLHYTDEFDNQILKAEELRVTGSELDAAYQQVSQELLEAIQLASRQIEAFHRQRVPKSWVHFGDDDIVLGKRYTPIDRAGLYVPGGRAAYVSTVLMNAIPARVAGVPRIVIATPPGAQKAINPAVLVAAQEVGVQEIYRVGGAQAIAALAYGTETIPKVDVITGPGNIYVTLAKKLVYGNVGIDSLAGPSEVLIIADEGANPVHVATDMLAQAEHDPMAAAILFTTDPALAKNVQVAVERQLVDHPRRIDTEKAIAHYGLIVLVESLDAAAELSNEFAPEHLELEVKDPWAVLPNIRHAGAIFLGYSTPEAVGDYLAGPNHTLPTSGAARYASALSVETFLKHSSIIQYSQTALNKVAGAIDALATAEGLPSHADSVKRRIQQDE.

Residues Tyr-130, Gln-192, and Asn-215 each contribute to the NAD(+) site. 3 residues coordinate substrate: Ser-238, Gln-260, and His-263. Zn(2+) contacts are provided by Gln-260 and His-263. Active-site proton acceptor residues include Glu-328 and His-329. Substrate is bound by residues His-329, Asp-362, Glu-416, and His-421. Asp-362 is a Zn(2+) binding site. Residue His-421 coordinates Zn(2+).

It belongs to the histidinol dehydrogenase family. It depends on Zn(2+) as a cofactor.

The catalysed reaction is L-histidinol + 2 NAD(+) + H2O = L-histidine + 2 NADH + 3 H(+). It functions in the pathway amino-acid biosynthesis; L-histidine biosynthesis; L-histidine from 5-phospho-alpha-D-ribose 1-diphosphate: step 9/9. In terms of biological role, catalyzes the sequential NAD-dependent oxidations of L-histidinol to L-histidinaldehyde and then to L-histidine. The protein is Histidinol dehydrogenase 2 (hisD2) of Nostoc sp. (strain PCC 7120 / SAG 25.82 / UTEX 2576).